The chain runs to 194 residues: Protein GrpE 2 (194 aa).

Over residues 1–17 (MNDIDKHKKETQTESKN) the composition is skewed to basic and acidic residues. The segment at 1 to 29 (MNDIDKHKKETQTESKNDLNNTTITQNNV) is disordered. Over residues 18–29 (DLNNTTITQNNV) the composition is skewed to polar residues.

It belongs to the GrpE family. Homodimer.

The protein localises to the cytoplasm. Participates actively in the response to hyperosmotic and heat shock by preventing the aggregation of stress-denatured proteins, in association with DnaK and GrpE. It is the nucleotide exchange factor for DnaK and may function as a thermosensor. Unfolded proteins bind initially to DnaJ; upon interaction with the DnaJ-bound protein, DnaK hydrolyzes its bound ATP, resulting in the formation of a stable complex. GrpE releases ADP from DnaK; ATP binding to DnaK triggers the release of the substrate protein, thus completing the reaction cycle. Several rounds of ATP-dependent interactions between DnaJ, DnaK and GrpE are required for fully efficient folding. This Buchnera aphidicola subsp. Baizongia pistaciae (strain Bp) protein is Protein GrpE 2.